A 209-amino-acid chain; its full sequence is Ribosomal RNA small subunit methyltransferase G (209 aa).

Residues G71, F76, A122–E123, and R135 each bind S-adenosyl-L-methionine.

It belongs to the methyltransferase superfamily. RNA methyltransferase RsmG family.

The protein resides in the cytoplasm. Its function is as follows. Specifically methylates the N7 position of a guanine in 16S rRNA. In Flavobacterium johnsoniae (strain ATCC 17061 / DSM 2064 / JCM 8514 / BCRC 14874 / CCUG 350202 / NBRC 14942 / NCIMB 11054 / UW101) (Cytophaga johnsonae), this protein is Ribosomal RNA small subunit methyltransferase G.